Here is an 882-residue protein sequence, read N- to C-terminus: Holliday junction resolvase MOC1, chloroplastic (882 aa).

Disordered regions lie at residues 87-148 and 323-351; these read IRDG…QTPT and TPAA…PRAA. A compositionally biased stretch (polar residues) spans 91–111; it reads PNSNSRCSTVRTHATRSKSTG. Over residues 112 to 125 the composition is skewed to low complexity; that stretch reads PSRATSSGPATAAP. Polar residues predominate over residues 134–148; the sequence is NDTQDGGLTSEQTPT. Residues 323 to 337 show a composition bias toward low complexity; it reads TPAAASQTPPTTVTS. Mg(2+) is bound by residues Asp397, Glu552, Asn629, and Asp634. The interval 710–882 is disordered; that stretch reads KVERKAQARS…DGGVSGSESE (173 aa). A compositionally biased stretch (acidic residues) spans 732-743; the sequence is EEPEAQAEEEQA. Composition is skewed to low complexity over residues 744 to 758, 769 to 783, 810 to 819, and 830 to 844; these read EAGT…GAAA, VESG…VAAG, SGKSSSKAEA, and ASVG…SVGS. Composition is skewed to gly residues over residues 845-857 and 868-882; these read SSGG…GGVK and AKAG…SESE.

Mg(2+) serves as cofactor. Mn(2+) is required as a cofactor.

It localises to the plastid. Its subcellular location is the chloroplast. The enzyme catalyses Endonucleolytic cleavage at a junction such as a reciprocal single-stranded crossover between two homologous DNA duplexes (Holliday junction).. Its function is as follows. A structure-specific endonuclease that resolves Holliday junction (HJ) intermediates during genetic recombination. Cleaves 4-way DNA junctions introducing paired nicks in opposing strands, leaving a 5'-terminal phosphate and a 3'-terminal hydroxyl group that are ligated to produce recombinant products. Mediates chloroplast nucleoid segregation during chloroplast division. This chain is Holliday junction resolvase MOC1, chloroplastic, found in Chlamydomonas reinhardtii (Chlamydomonas smithii).